Reading from the N-terminus, the 106-residue chain is ATP-dependent Clp protease adapter protein ClpS (106 aa).

The protein belongs to the ClpS family. In terms of assembly, binds to the N-terminal domain of the chaperone ClpA.

Its function is as follows. Involved in the modulation of the specificity of the ClpAP-mediated ATP-dependent protein degradation. This chain is ATP-dependent Clp protease adapter protein ClpS, found in Sodalis glossinidius (strain morsitans).